Consider the following 219-residue polypeptide: Leukocyte surface antigen CD53 (219 aa).

Over 1–11 (MGMSSLKLLKF) the chain is Cytoplasmic. The helical transmembrane segment at 12–32 (VLFFFNLIFWFCGCCILGLGI) threads the bilayer. Topologically, residues 33–54 (YLLIHSKFGVLFHNLPSLTLGN) are extracellular. Residues 55–69 (VLVIVGSVIMVVAFL) form a helical membrane-spanning segment. At 70–80 (GCMGSIKENKC) the chain is on the cytoplasmic side. The chain crosses the membrane as a helical span at residues 81-106 (LLMSFFVLLLIILLAEVTLAILLFVY). Topologically, residues 107-181 (EQKLKEYVAE…IQAKQWFHSN (75 aa)) are extracellular. Residues N129 and N148 are each glycosylated (N-linked (GlcNAc...) asparagine). A helical transmembrane segment spans residues 182–206 (FLYIGITTICVCVIQVLGMSFALTL). Topologically, residues 207-219 (NCQIDKTSQVLGL) are cytoplasmic.

The protein belongs to the tetraspanin (TM4SF) family. Interacts with SCIMP. Interacts with CD45/PTPRC. Interacts with IL7R. Interacts with RBL2 and PPP2CA.

The protein localises to the cell membrane. It is found in the cell junction. The protein resides in the membrane. It localises to the synapse. Its function is as follows. Structural component of specialized membrane microdomains known as tetraspanin-enriched microdomains (TERMs), which act as platforms for receptor clustering and signaling. Participates thereby in diverse biological functions such as cell signal transduction, adhesion, migration and protein trafficking. Plays a role in the activation of monocytes and B-cells. Acts as an essential regulator of B-cell development by promoting interleukin-7 receptor/IL7R signaling. Also promotes, in B-cells, the BCR signaling by recruiting PKC to the plasma membrane in order to phosphorylate its substrates. Plays an essential role in B- and T-cells homing to lymph nodes by stabilizing L-selectin/SELL cell surface expression. Also mediates metabolic and inflammatory functions in hepatocytes and adipose tissue by promoting TNF-alpha and LPS signaling independent of the immune compartment. In Bos taurus (Bovine), this protein is Leukocyte surface antigen CD53 (CD53).